A 217-amino-acid chain; its full sequence is Uracil-DNA glycosylase (217 aa).

Aspartate 62 (proton acceptor) is an active-site residue.

It belongs to the uracil-DNA glycosylase (UDG) superfamily. UNG family.

It localises to the cytoplasm. The catalysed reaction is Hydrolyzes single-stranded DNA or mismatched double-stranded DNA and polynucleotides, releasing free uracil.. Excises uracil residues from the DNA which can arise as a result of misincorporation of dUMP residues by DNA polymerase or due to deamination of cytosine. This chain is Uracil-DNA glycosylase, found in Streptococcus pyogenes serotype M6 (strain ATCC BAA-946 / MGAS10394).